The chain runs to 128 residues: Platelet basic protein (128 aa).

Positions 1-34 (MSLRLDTTPSCNSARPLHALQVLLLLSLLLTALA) are cleaved as a signal peptide. 2 cysteine pairs are disulfide-bonded: Cys63–Cys89 and Cys65–Cys105.

This sequence belongs to the intercrine alpha (chemokine CxC) family. As to quaternary structure, beta-thromboglobulin is a homotetramer. Proteolytic removal of residues 1-9 produces the active peptide connective tissue-activating peptide III (CTAP-III) (low-affinity platelet factor IV (LA-PF4)). Post-translationally, proteolytic removal of residues 1-13 produces the active peptide beta-thromboglobulin, which is released from platelets along with platelet factor 4 and platelet-derived growth factor. In terms of processing, NAP-2(1-66) is produced by proteolytical processing, probably after secretion by leukocytes other than neutrophils. NAP-2(73) and NAP-2(74) seem not be produced by proteolytical processing of secreted precursors but are released in an active form from platelets.

It is found in the secreted. Its function is as follows. LA-PF4 stimulates DNA synthesis, mitosis, glycolysis, intracellular cAMP accumulation, prostaglandin E2 secretion, and synthesis of hyaluronic acid and sulfated glycosaminoglycan. It also stimulates the formation and secretion of plasminogen activator by human synovial cells. NAP-2 is a ligand for CXCR1 and CXCR2, and NAP-2, NAP-2(73), NAP-2(74), NAP-2(1-66), and most potent NAP-2(1-63) are chemoattractants and activators for neutrophils. TC-1 and TC-2 are antibacterial proteins, in vitro released from activated platelet alpha-granules. CTAP-III(1-81) is more potent than CTAP-III desensitize chemokine-induced neutrophil activation. In Homo sapiens (Human), this protein is Platelet basic protein (PPBP).